The sequence spans 198 residues: Nucleoside triphosphate pyrophosphatase 1 (198 aa).

The active-site Proton acceptor is Asp-75.

It belongs to the Maf family. A divalent metal cation is required as a cofactor.

Its subcellular location is the cytoplasm. The catalysed reaction is a ribonucleoside 5'-triphosphate + H2O = a ribonucleoside 5'-phosphate + diphosphate + H(+). It carries out the reaction a 2'-deoxyribonucleoside 5'-triphosphate + H2O = a 2'-deoxyribonucleoside 5'-phosphate + diphosphate + H(+). Its function is as follows. Nucleoside triphosphate pyrophosphatase. May have a dual role in cell division arrest and in preventing the incorporation of modified nucleotides into cellular nucleic acids. The polypeptide is Nucleoside triphosphate pyrophosphatase 1 (Jannaschia sp. (strain CCS1)).